A 239-amino-acid chain; its full sequence is Ribose-5-phosphate isomerase A (239 aa).

Residues 30-33, 87-90, and 100-103 contribute to the substrate site; these read SGST, DGAD, and KGGG. Glu-109 (proton acceptor) is an active-site residue. Lys-127 contacts substrate.

Belongs to the ribose 5-phosphate isomerase family. As to quaternary structure, homodimer.

The catalysed reaction is aldehydo-D-ribose 5-phosphate = D-ribulose 5-phosphate. It functions in the pathway carbohydrate degradation; pentose phosphate pathway; D-ribose 5-phosphate from D-ribulose 5-phosphate (non-oxidative stage): step 1/1. Functionally, catalyzes the reversible conversion of ribose-5-phosphate to ribulose 5-phosphate. In Synechococcus sp. (strain CC9605), this protein is Ribose-5-phosphate isomerase A.